The sequence spans 886 residues: Inter-alpha-trypsin inhibitor heavy chain H3 (886 aa).

The first 18 residues, 1–18 (MWWPYLVLALLSGLEASG), serve as a signal peptide directing secretion. Positions 19–30 (FPRSPLRLLGKR) are excised as a propeptide. In terms of domain architecture, VIT spans 26–155 (LLGKRSLPEG…KVTFELTYEE (130 aa)). Asn-88 carries an N-linked (GlcNAc...) asparagine glycan. The VWFA domain occupies 279 to 439 (PKNIVFVIDI…YNFLETMALE (161 aa)). A glycan (N-linked (GlcNAc...) asparagine) is linked at Asn-577. Asp-646 carries the aspartate 1-(chondroitin 4-sulfate)-ester modification. Residues 647 to 886 (PHFIIQVPGK…HTDYIVPSLF (240 aa)) constitute a propeptide that is removed on maturation.

Belongs to the ITIH family. As to quaternary structure, I-alpha-I plasma protease inhibitors are assembled from one or two heavy chains (HC) and one light chain, bikunin. Pre-alpha-inhibitor (P-alpha-I) is composed of ITIH3/HC3 and bikunin. In terms of processing, heavy chains are linked to bikunin via chondroitin 4-sulfate esterified to the alpha-carboxyl of the C-terminal aspartate after propeptide cleavage.

It localises to the secreted. Its function is as follows. May act as a carrier of hyaluronan in serum or as a binding protein between hyaluronan and other matrix protein, including those on cell surfaces in tissues to regulate the localization, synthesis and degradation of hyaluronan which are essential to cells undergoing biological processes. The sequence is that of Inter-alpha-trypsin inhibitor heavy chain H3 (ITIH3) from Mesocricetus auratus (Golden hamster).